The chain runs to 38 residues: Mu-agatoxin-Hc1b (38 aa).

Intrachain disulfides connect Cys3/Cys19, Cys10/Cys24, Cys18/Cys34, and Cys26/Cys32. A Serine amide modification is found at Ser38.

It belongs to the neurotoxin 07 (Beta/delta-agtx) family. 02 (aga-3) subfamily. Expressed by the venom gland.

The protein resides in the secreted. Insecticidal neurotoxin that induces irreversible neuromuscular blockade in house crickets (A.domesticus). Modifies presynaptic voltage-gated sodium channels (Nav), causing them to open at the normal resting potential of the nerve. This leads to spontaneous release of neurotransmitter and repetitive action potentials in motor neurons. The chain is Mu-agatoxin-Hc1b from Hololena curta (Funnel-web spider).